The primary structure comprises 92 residues: Cell division protein FtsL (92 aa).

At 1–3 the chain is on the cytoplasmic side; sequence MGR. The helical transmembrane segment at 4–21 threads the bilayer; sequence ISLIVAALLMLSAISLVT. The Periplasmic segment spans residues 22–92; sequence SRYQSRQLFI…YMNQPAGGAQ (71 aa).

Belongs to the FtsL family. In terms of assembly, part of a complex composed of FtsB, FtsL and FtsQ.

It is found in the cell inner membrane. Its function is as follows. Essential cell division protein. May link together the upstream cell division proteins, which are predominantly cytoplasmic, with the downstream cell division proteins, which are predominantly periplasmic. The polypeptide is Cell division protein FtsL (Bordetella pertussis (strain Tohama I / ATCC BAA-589 / NCTC 13251)).